The primary structure comprises 352 residues: Holliday junction branch migration complex subunit RuvB (352 aa).

Residues 4 to 185 are large ATPase domain (RuvB-L); that stretch reads ADRLIAATGP…FGIVQRLEFY (182 aa). Residues Ile24, Arg25, Gly66, Lys69, Thr70, Thr71, 132 to 134, Arg175, Tyr185, and Arg222 contribute to the ATP site; that span reads EDF. Thr70 provides a ligand contact to Mg(2+). The segment at 186–256 is small ATPAse domain (RuvB-S); sequence STADLATIVS…VADLALNLLD (71 aa). A head domain (RuvB-H) region spans residues 259 to 352; sequence EHGFDHQDRR…VDEFLDAVDD (94 aa). DNA contacts are provided by Arg295, Arg314, and Arg319.

Belongs to the RuvB family. In terms of assembly, homohexamer. Forms an RuvA(8)-RuvB(12)-Holliday junction (HJ) complex. HJ DNA is sandwiched between 2 RuvA tetramers; dsDNA enters through RuvA and exits via RuvB. An RuvB hexamer assembles on each DNA strand where it exits the tetramer. Each RuvB hexamer is contacted by two RuvA subunits (via domain III) on 2 adjacent RuvB subunits; this complex drives branch migration. In the full resolvosome a probable DNA-RuvA(4)-RuvB(12)-RuvC(2) complex forms which resolves the HJ.

It is found in the cytoplasm. It carries out the reaction ATP + H2O = ADP + phosphate + H(+). In terms of biological role, the RuvA-RuvB-RuvC complex processes Holliday junction (HJ) DNA during genetic recombination and DNA repair, while the RuvA-RuvB complex plays an important role in the rescue of blocked DNA replication forks via replication fork reversal (RFR). RuvA specifically binds to HJ cruciform DNA, conferring on it an open structure. The RuvB hexamer acts as an ATP-dependent pump, pulling dsDNA into and through the RuvAB complex. RuvB forms 2 homohexamers on either side of HJ DNA bound by 1 or 2 RuvA tetramers; 4 subunits per hexamer contact DNA at a time. Coordinated motions by a converter formed by DNA-disengaged RuvB subunits stimulates ATP hydrolysis and nucleotide exchange. Immobilization of the converter enables RuvB to convert the ATP-contained energy into a lever motion, pulling 2 nucleotides of DNA out of the RuvA tetramer per ATP hydrolyzed, thus driving DNA branch migration. The RuvB motors rotate together with the DNA substrate, which together with the progressing nucleotide cycle form the mechanistic basis for DNA recombination by continuous HJ branch migration. Branch migration allows RuvC to scan DNA until it finds its consensus sequence, where it cleaves and resolves cruciform DNA. The sequence is that of Holliday junction branch migration complex subunit RuvB from Pseudomonas fluorescens (strain SBW25).